Consider the following 1065-residue polypeptide: NLR family CARD domain-containing protein 3 (1065 aa).

The span at M1 to R10 shows a compositional bias: basic and acidic residues. A disordered region spans residues M1–R62. In terms of domain architecture, NACHT spans R139–E460. ATP is bound at residue G145–T152. Residues S457–E460 carry the TRAF6-binding motif. LRR repeat units follow at residues E617 to C639, K641 to G663, D665 to R688, N693 to D716, N721 to E744, N749 to D772, N777 to E800, N805 to G828, N833 to H856, N861 to V884, N889 to Q912, N917 to R940, N945 to E968, N973 to N996, N1001 to N1029, and R1031 to E1052.

This sequence belongs to the NLRP family. Directly interacts (via CARD) with TMEM173/STING; this interaction reduces TMEM173 trafficking to the perinuclear region in response to interferon stimulatory DNA. Also interacts, but to a lesser extent, with TBK1. Interacts with TRAF6; this interaction results in decreased TRAF6 'Lys-63'-linked polyubiquitination, but leaves 'Lys-48'-linked chains unchanged, promoting TRAF6 protein degradation. Interacts with PIK3R1/PIK3R2; this interaction disrupts the association between PIK3R1/PIK3R2 and the p110 catalytic subunit PIK3CA/PIK3CB/PIK3CD and reduces PIK3R1/PIK3R2 activation. Weakly interacts with PYCARD/ASC. Interacts with CASP1 and CASP5.

It localises to the cytoplasm. Its function is as follows. Negative regulator of the innate immune response. Attenuates signaling pathways activated by Toll-like receptors (TLRs) and the DNA sensor STING/TMEM173 in response to pathogen-associated molecular patterns, such as intracellular poly(dA:dT), but not poly(I:C), or in response to DNA virus infection, including that of Herpes simplex virus 1 (HSV1). May affect TLR4 signaling by acting at the level of TRAF6 ubiquitination, decreasing the activating 'Lys-63'-linked ubiquitination and leaving unchanged the degradative 'Lys-48'-linked ubiquitination. Inhibits the PI3K-AKT-mTOR pathway possibly by directly interacting with the posphatidylinositol 3-kinase regulatory subunit p85 (PIK3R1/PIK3R2) and disrupting the association between PIK3R1/PIK3R2 and the catalytic subunit p110 (PIK3CA/PIK3CB/PIK3CD) and reducing PIK3R1/PIK3R2 activation. Via its regulation of the PI3K-AKT-mTOR pathway, controls cell proliferation, predominantly in intestinal epithelial cells. May also affect NOD1- or NOD2-mediated NF-kappa-B activation. Might also affect the inflammatory response by preventing NLRP3 inflammasome formation, CASP1 cleavage and IL1B maturation. This Homo sapiens (Human) protein is NLR family CARD domain-containing protein 3 (NLRC3).